Consider the following 207-residue polypeptide: MTKKAESKELPPFEYPEGYQLFAGVDEVGRGPLVGAVVTAAVILDPNNPIEGLTDSKKLTDKKRELLFPEIQEKALAWSLGRCEAHEIDELNILQATMVAMQRAIAGLNITPDFALIDGNKVPELPMAGLAVVKGDLRVQEISAASIIAKVTRDREMEELDKAYPQYGFAKHKGYPTKAHFEAIEEHGVISEHRRSFKPVKRVLGIE.

Residues Gln20–Glu207 enclose the RNase H type-2 domain. A divalent metal cation-binding residues include Asp26, Glu27, and Asp118.

This sequence belongs to the RNase HII family. Requires Mn(2+) as cofactor. Mg(2+) serves as cofactor.

The protein localises to the cytoplasm. The catalysed reaction is Endonucleolytic cleavage to 5'-phosphomonoester.. Functionally, endonuclease that specifically degrades the RNA of RNA-DNA hybrids. This chain is Ribonuclease HII, found in Aliivibrio fischeri (strain ATCC 700601 / ES114) (Vibrio fischeri).